A 496-amino-acid chain; its full sequence is GTPase Der (496 aa).

EngA-type G domains are found at residues 3-166 and 209-382; these read PVIA…VGKF and VKLA…TCAT. GTP is bound by residues 9–16, 56–60, 118–121, 215–222, 262–266, and 327–330; these read GRPNVGKS, DTGGI, NKTD, DTAGV, and NKWD. The region spanning 383-467 is the KH-like domain; the sequence is RRVGTSMLTR…PIRIQFKEGE (85 aa).

This sequence belongs to the TRAFAC class TrmE-Era-EngA-EngB-Septin-like GTPase superfamily. EngA (Der) GTPase family. Associates with the 50S ribosomal subunit.

Its function is as follows. GTPase that plays an essential role in the late steps of ribosome biogenesis. The sequence is that of GTPase Der from Proteus mirabilis (strain HI4320).